Here is a 344-residue protein sequence, read N- to C-terminus: MALTRNRPFVVVLLLGFVIMSTITIGAQSIGVCYGRNGNNLPSASQVINLYKSNGIGSMRIYDPNSDTLQALRGSDIELILDVPNTDLQSLASDASAAATWVQNNVVNYASEVKFRYIAVGNEVLPTGSNAQYAQYVLPAMKNVQSAITSAGLQDQIKVSTATFSAVLGKSYPPSEGSFSDDVSSFINPIISFLAENGSPLLANIYPYFSYTGDTQNIRLDYALFTASGVVVQDGSYQYQNLFDALLDALYAALEKAGGSNLKIVVSESGWPSEGGTAATVDNARTYYKNLINHVKGGTPRKSGAIETYLFAMFDENQKTGLETEKHFGLFTPGQESKYQISFS.

The N-terminal stretch at 1-27 is a signal peptide; the sequence is MALTRNRPFVVVLLLGFVIMSTITIGA. The active-site Proton donor is the Glu123. Catalysis depends on Glu268, which acts as the Nucleophile.

This sequence belongs to the glycosyl hydrolase 17 family.

It carries out the reaction Hydrolysis of (1-&gt;3)-beta-D-glucosidic linkages in (1-&gt;3)-beta-D-glucans.. Implicated in the defense of plants against pathogens. The sequence is that of Glucan endo-1,3-beta-glucosidase from Vitis vinifera (Grape).